The sequence spans 338 residues: DNA-directed RNA polymerase subunit alpha (338 aa).

The alpha N-terminal domain (alpha-NTD) stretch occupies residues 1–226 (MLIAQRPSLT…ELFGLARELN (226 aa)). Positions 243-338 (LAADLVMPIE…DAGFLETEHY (96 aa)) are alpha C-terminal domain (alpha-CTD).

Belongs to the RNA polymerase alpha chain family. As to quaternary structure, homodimer. The RNAP catalytic core consists of 2 alpha, 1 beta, 1 beta' and 1 omega subunit. When a sigma factor is associated with the core the holoenzyme is formed, which can initiate transcription.

It catalyses the reaction RNA(n) + a ribonucleoside 5'-triphosphate = RNA(n+1) + diphosphate. Its function is as follows. DNA-dependent RNA polymerase catalyzes the transcription of DNA into RNA using the four ribonucleoside triphosphates as substrates. The protein is DNA-directed RNA polymerase subunit alpha of Streptomyces avermitilis (strain ATCC 31267 / DSM 46492 / JCM 5070 / NBRC 14893 / NCIMB 12804 / NRRL 8165 / MA-4680).